The following is a 152-amino-acid chain: UPF0266 membrane protein ESA_01432 (152 aa).

Helical transmembrane passes span 1 to 21 (MTLTDGVLVIFIIALLGWAIY), 45 to 65 (ADSLIFTGLVAILIWQNVASH), and 67 to 87 (ALLTTWLLGALGLLAIYLFWI).

Belongs to the UPF0266 family.

The protein resides in the cell inner membrane. This chain is UPF0266 membrane protein ESA_01432, found in Cronobacter sakazakii (strain ATCC BAA-894) (Enterobacter sakazakii).